Reading from the N-terminus, the 244-residue chain is Phosphoribosyl isomerase A (244 aa).

D10 acts as the Proton acceptor in catalysis. The active-site Proton donor is D129.

Belongs to the HisA/HisF family.

It localises to the cytoplasm. The catalysed reaction is 1-(5-phospho-beta-D-ribosyl)-5-[(5-phospho-beta-D-ribosylamino)methylideneamino]imidazole-4-carboxamide = 5-[(5-phospho-1-deoxy-D-ribulos-1-ylimino)methylamino]-1-(5-phospho-beta-D-ribosyl)imidazole-4-carboxamide. The enzyme catalyses N-(5-phospho-beta-D-ribosyl)anthranilate = 1-(2-carboxyphenylamino)-1-deoxy-D-ribulose 5-phosphate. It functions in the pathway amino-acid biosynthesis; L-histidine biosynthesis; L-histidine from 5-phospho-alpha-D-ribose 1-diphosphate: step 4/9. The protein operates within amino-acid biosynthesis; L-tryptophan biosynthesis; L-tryptophan from chorismate: step 3/5. Its function is as follows. Involved in both the histidine and tryptophan biosynthetic pathways. This is Phosphoribosyl isomerase A (priA) from Mycobacterium tuberculosis (strain CDC 1551 / Oshkosh).